Here is a 295-residue protein sequence, read N- to C-terminus: NAD kinase (295 aa).

Asp72 (proton acceptor) is an active-site residue. NAD(+) is bound by residues Asp72–Gly73, Asn146–Asp147, Arg157, Lys174, Asp176, Thr187–Ser192, and Gln247.

This sequence belongs to the NAD kinase family. The cofactor is a divalent metal cation.

The protein resides in the cytoplasm. It catalyses the reaction NAD(+) + ATP = ADP + NADP(+) + H(+). In terms of biological role, involved in the regulation of the intracellular balance of NAD and NADP, and is a key enzyme in the biosynthesis of NADP. Catalyzes specifically the phosphorylation on 2'-hydroxyl of the adenosine moiety of NAD to yield NADP. This is NAD kinase from Ectopseudomonas mendocina (strain ymp) (Pseudomonas mendocina).